The following is a 426-amino-acid chain: MFVDQVSVYVKAGDGGNGLVAYRREKYVPKGGPAGGDGGNGSNVVFKVDEGLNTLMEFRYNRHFKGKRGENGMSKTQHGRNADPLVIPVPPGTTVIDEDTGEVIADLTKHEQEAVIVKGGRGGRGNTRFATPRNPAPDMAENGEPGQERNIKVELKLIADVGLVGFPSVGKSTLLSVVSAAKPKIADYHFTTLSPNLGVVDTQDSRSFVLADLPGLIEGASQGIGLGHQFLRHIERTRVILHVIDMAGTEGRDPYEDYKKINQELSDYDEKLMDRPQIIAANKMDMPNAQENLIQFKNELEDDIPVYEISALTKDGLRDLLFAIADKLETIPKYEKELEETDDTVVYRYQKEEDPFHITRDPDGAFVLYGQRIEKLFKMTDFQHDEAVQRFARQLRGMGVDKALREKGAQDGDVVRLLEYEFEFIE.

The 158-residue stretch at 1–158 (MFVDQVSVYV…RNIKVELKLI (158 aa)) folds into the Obg domain. 2 disordered regions span residues 66–86 (GKRGENGMSKTQHGRNADPLV) and 119–146 (GGRGGRGNTRFATPRNPAPDMAENGEPG). In terms of domain architecture, OBG-type G spans 159-329 (ADVGLVGFPS…LLFAIADKLE (171 aa)). GTP contacts are provided by residues 165 to 172 (GFPSVGKS), 190 to 194 (FTTLS), 212 to 215 (DLPG), 282 to 285 (NKMD), and 310 to 312 (SAL). Mg(2+) contacts are provided by Ser-172 and Thr-192. Positions 348–426 (RYQKEEDPFH…LLEYEFEFIE (79 aa)) constitute an OCT domain.

This sequence belongs to the TRAFAC class OBG-HflX-like GTPase superfamily. OBG GTPase family. As to quaternary structure, monomer. Mg(2+) serves as cofactor.

The protein resides in the cytoplasm. Its function is as follows. An essential GTPase which binds GTP, GDP and possibly (p)ppGpp with moderate affinity, with high nucleotide exchange rates and a fairly low GTP hydrolysis rate. Plays a role in control of the cell cycle, stress response, ribosome biogenesis and in those bacteria that undergo differentiation, in morphogenesis control. In Oceanobacillus iheyensis (strain DSM 14371 / CIP 107618 / JCM 11309 / KCTC 3954 / HTE831), this protein is GTPase Obg.